A 156-amino-acid chain; its full sequence is Small ribosomal subunit protein uS7 (156 aa).

The protein belongs to the universal ribosomal protein uS7 family. Part of the 30S ribosomal subunit. Contacts proteins S9 and S11.

Its function is as follows. One of the primary rRNA binding proteins, it binds directly to 16S rRNA where it nucleates assembly of the head domain of the 30S subunit. Is located at the subunit interface close to the decoding center, probably blocks exit of the E-site tRNA. This chain is Small ribosomal subunit protein uS7, found in Frankia casuarinae (strain DSM 45818 / CECT 9043 / HFP020203 / CcI3).